We begin with the raw amino-acid sequence, 225 residues long: Uracil-DNA glycosylase (225 aa).

Asp65 functions as the Proton acceptor in the catalytic mechanism.

The protein belongs to the uracil-DNA glycosylase (UDG) superfamily. UNG family.

The protein resides in the cytoplasm. The enzyme catalyses Hydrolyzes single-stranded DNA or mismatched double-stranded DNA and polynucleotides, releasing free uracil.. Functionally, excises uracil residues from the DNA which can arise as a result of misincorporation of dUMP residues by DNA polymerase or due to deamination of cytosine. The protein is Uracil-DNA glycosylase of Bacillus cereus (strain ZK / E33L).